Consider the following 844-residue polypeptide: RING finger containing E3 ubiquitin-protein ligase WSV222 (844 aa).

Position 229–236 (A229–T236) interacts with ATP. The segment at C308 to R359 adopts an RING-type; atypical zinc-finger fold.

Interacts with host UBE2E1/UBCH6; this interaction results in WSV222 auto-ubiquitination. Interacts with host tumor suppressor-like protein.

It catalyses the reaction S-ubiquitinyl-[E2 ubiquitin-conjugating enzyme]-L-cysteine + [acceptor protein]-L-lysine = [E2 ubiquitin-conjugating enzyme]-L-cysteine + N(6)-ubiquitinyl-[acceptor protein]-L-lysine.. It functions in the pathway protein modification; protein ubiquitination. Probable E3 ubiquitin-protein ligase which accepts ubiquitin from the E2 ubiquitin-conjugating enzyme UBE2E1/UBCH6 in the form of a thioester and then directly transfers the ubiquitin to targeted substrates. Mediates ubiquitination of host tumor-suppressor-like protein (TSL) targeting it for degradation. Might function as an anti-apoptosis protein by counteracting TSL-induced apoptosis. The chain is RING finger containing E3 ubiquitin-protein ligase WSV222 from White spot syndrome virus (isolate Shrimp/China/Tongan/1996) (WSSV).